A 183-amino-acid polypeptide reads, in one-letter code: Dual-action ribosomal maturation protein DarP (183 aa).

Residues 1–23 (MTKQPDDWLDEVPDNENDDDDDE) form a disordered region. Residues 7 to 23 (DWLDEVPDNENDDDDDE) show a composition bias toward acidic residues.

This sequence belongs to the DarP family.

The protein resides in the cytoplasm. In terms of biological role, member of a network of 50S ribosomal subunit biogenesis factors which assembles along the 30S-50S interface, preventing incorrect 23S rRNA structures from forming. Promotes peptidyl transferase center (PTC) maturation. This Cronobacter sakazakii (strain ATCC BAA-894) (Enterobacter sakazakii) protein is Dual-action ribosomal maturation protein DarP.